A 343-amino-acid chain; its full sequence is Glucan endo-1,3-beta-glucosidase, acidic isoform GI9 (343 aa).

A signal peptide spans 1–29 (MTLCIKNGFLAAALVLVGLLICSIQMIGA). Gln30 is subject to Pyrrolidone carboxylic acid. Residue Glu124 is the Proton donor of the active site. Glu264 functions as the Nucleophile in the catalytic mechanism.

This sequence belongs to the glycosyl hydrolase 17 family.

It is found in the secreted. The protein localises to the extracellular space. It carries out the reaction Hydrolysis of (1-&gt;3)-beta-D-glucosidic linkages in (1-&gt;3)-beta-D-glucans.. Its function is as follows. Implicated in the defense of plants against pathogens. In Nicotiana tabacum (Common tobacco), this protein is Glucan endo-1,3-beta-glucosidase, acidic isoform GI9 (PR2).